A 570-amino-acid polypeptide reads, in one-letter code: 4-hydroxy-7-methoxy-3-oxo-3,4-dihydro-2H-1,4-benzoxazin-2-yl glucoside beta-D-glucosidase 1c, chloroplastic (570 aa).

A chloroplast-targeting transit peptide spans 1–50; it reads MALLAAATLNPTTHLSIRSRAGHNSENLWLRSAASSQKSKGRFCNLTVRA. A beta-D-glucoside contacts are provided by residues Gln-92, His-194, and 239-240; that span reads NE. Glu-240 acts as the Proton donor in catalysis. Cys-259 and Cys-265 are disulfide-bonded. A beta-D-glucoside contacts are provided by residues Tyr-383, Glu-456, Trp-504, 511 to 512, and Phe-520; that span reads EW. Catalysis depends on Glu-456, which acts as the Nucleophile.

The protein belongs to the glycosyl hydrolase 1 family. Homo- and heterohexamers. Expressed in young seedlings early after germination.

The protein resides in the plastid. Its subcellular location is the chloroplast. It catalyses the reaction Hydrolysis of terminal, non-reducing beta-D-glucosyl residues with release of beta-D-glucose.. The enzyme catalyses DIMBOA beta-D-glucoside + H2O = DIMBOA + D-glucose. The catalysed reaction is DIBOA beta-D-glucoside + H2O = DIBOA + D-glucose. Functionally, acts in defense of young plant parts against pests via the production of hydroxamic acids from hydroxamic acid glucosides. Enzymatic activity is highly correlated with plant growth. The preferred substrate is DIMBOA-beta-D-glucoside. The chain is 4-hydroxy-7-methoxy-3-oxo-3,4-dihydro-2H-1,4-benzoxazin-2-yl glucoside beta-D-glucosidase 1c, chloroplastic (GLU1C) from Triticum aestivum (Wheat).